The primary structure comprises 236 residues: ATP synthase subunit a (236 aa).

A run of 5 helical transmembrane segments spans residues 17–37 (LSDM…AVAA), 75–95 (FLTL…LGLP), 112–132 (DATV…YYGV), 174–194 (IYAG…YGVL), and 208–228 (FSIF…MVYM).

This sequence belongs to the ATPase A chain family. In terms of assembly, F-type ATPases have 2 components, CF(1) - the catalytic core - and CF(0) - the membrane proton channel. CF(1) has five subunits: alpha(3), beta(3), gamma(1), delta(1), epsilon(1). CF(0) has three main subunits: a(1), b(2) and c(9-12). The alpha and beta chains form an alternating ring which encloses part of the gamma chain. CF(1) is attached to CF(0) by a central stalk formed by the gamma and epsilon chains, while a peripheral stalk is formed by the delta and b chains.

It is found in the cell membrane. Key component of the proton channel; it plays a direct role in the translocation of protons across the membrane. This Geobacillus stearothermophilus (Bacillus stearothermophilus) protein is ATP synthase subunit a.